Here is a 37-residue protein sequence, read N- to C-terminus: uncharacterized protein (37 aa).

The chain crosses the membrane as a helical span at residues 17 to 37; sequence TFVLIVVLFILLIIVGAAFIC.

Belongs to the SscA family.

Its subcellular location is the membrane. This is an uncharacterized protein from Bacillus subtilis (strain 168).